Consider the following 523-residue polypeptide: Vanin-like protein 3 (523 aa).

The signal sequence occupies residues 1-19 (MAVFLRRFLWLISFTLVLT). The CN hydrolase domain maps to 29-298 (YIAGVVEYRP…RKLLLAKVPL (270 aa)). The N-linked (GlcNAc...) asparagine glycan is linked to Asn-64. The active-site Proton acceptor is Glu-74. Lys-167 (proton donor) is an active-site residue. Residues Asn-177 and Asn-192 are each glycosylated (N-linked (GlcNAc...) asparagine). Cys-200 functions as the Nucleophile in the catalytic mechanism. Asn-330 and Asn-468 each carry an N-linked (GlcNAc...) asparagine glycan. Residue Asn-498 is the site of GPI-anchor amidated asparagine attachment. Positions 499 to 523 (GGAGRLGTLLFLLITPLIMMHLFRE) are cleaved as a propeptide — removed in mature form.

This sequence belongs to the carbon-nitrogen hydrolase superfamily. BTD/VNN family. Expressed in third instar larvae.

The protein resides in the cell membrane. This is Vanin-like protein 3 from Drosophila melanogaster (Fruit fly).